Reading from the N-terminus, the 116-residue chain is MTNKIILALEAEQMTKEIPTFAPGDTIVVQVKVKEGDRSRLQAFEGVVIAKRNRGVNSAFTVRKISNGVGVERTFQTYSPQIDSMAVKRRGDVRKAKLYYLRDLSGKAARIKEKLA.

Belongs to the bacterial ribosomal protein bL19 family.

Its function is as follows. This protein is located at the 30S-50S ribosomal subunit interface and may play a role in the structure and function of the aminoacyl-tRNA binding site. The polypeptide is Large ribosomal subunit protein bL19 (Pseudomonas fluorescens (strain Pf0-1)).